We begin with the raw amino-acid sequence, 270 residues long: Diaminopimelate epimerase (270 aa).

Residues N15, Q49, and N66 each coordinate substrate. The Proton donor role is filled by C75. Residues 76–77 (GN), N155, N187, and 204–205 (ER) contribute to the substrate site. C213 functions as the Proton acceptor in the catalytic mechanism. Position 214–215 (214–215 (GS)) interacts with substrate.

The protein belongs to the diaminopimelate epimerase family. Homodimer.

Its subcellular location is the cytoplasm. It carries out the reaction (2S,6S)-2,6-diaminopimelate = meso-2,6-diaminopimelate. Its pathway is amino-acid biosynthesis; L-lysine biosynthesis via DAP pathway; DL-2,6-diaminopimelate from LL-2,6-diaminopimelate: step 1/1. Catalyzes the stereoinversion of LL-2,6-diaminopimelate (L,L-DAP) to meso-diaminopimelate (meso-DAP), a precursor of L-lysine and an essential component of the bacterial peptidoglycan. This Rickettsia rickettsii (strain Iowa) protein is Diaminopimelate epimerase.